The following is an 89-amino-acid chain: Small ribosomal subunit protein uS15 (89 aa).

The protein belongs to the universal ribosomal protein uS15 family. In terms of assembly, part of the 30S ribosomal subunit. Forms a bridge to the 50S subunit in the 70S ribosome, contacting the 23S rRNA.

In terms of biological role, one of the primary rRNA binding proteins, it binds directly to 16S rRNA where it helps nucleate assembly of the platform of the 30S subunit by binding and bridging several RNA helices of the 16S rRNA. Forms an intersubunit bridge (bridge B4) with the 23S rRNA of the 50S subunit in the ribosome. The chain is Small ribosomal subunit protein uS15 from Corynebacterium urealyticum (strain ATCC 43042 / DSM 7109).